Here is a 397-residue protein sequence, read N- to C-terminus: Elongation factor Tu (397 aa).

The region spanning 10–207 (KPHVNIGTLG…AVDNNIPDPV (198 aa)) is the tr-type G domain. The interval 19–26 (GHVDHGKT) is G1. 19–26 (GHVDHGKT) contacts GTP. Thr26 serves as a coordination point for Mg(2+). The interval 63–67 (GITIN) is G2. Residues 84 to 87 (DAPG) are G3. GTP is bound by residues 84-88 (DAPGH) and 139-142 (NKSD). The tract at residues 139 to 142 (NKSD) is G4. A G5 region spans residues 177–179 (SGL).

The protein belongs to the TRAFAC class translation factor GTPase superfamily. Classic translation factor GTPase family. EF-Tu/EF-1A subfamily. As to quaternary structure, monomer.

The protein resides in the cytoplasm. It catalyses the reaction GTP + H2O = GDP + phosphate + H(+). In terms of biological role, GTP hydrolase that promotes the GTP-dependent binding of aminoacyl-tRNA to the A-site of ribosomes during protein biosynthesis. The protein is Elongation factor Tu of Leifsonia xyli subsp. xyli (strain CTCB07).